Here is a 400-residue protein sequence, read N- to C-terminus: Cytochrome b (400 aa).

Transmembrane regions (helical) follow at residues 32–52 (FGSL…TLAM), 76–98 (WLIR…LHIG), 113–133 (TWSI…LGYV), and 179–199 (FFSL…MHLI). The heme b site is built by H82 and H96. Residues H183 and H197 each coordinate heme b. Residue H202 coordinates a ubiquinone. The next 4 helical transmembrane spans lie at 226 to 246 (YLFK…IFVF), 290 to 310 (AVGV…PYLD), 322 to 342 (LSKV…QLGA), and 349 to 369 (FIVF…IIIP).

Belongs to the cytochrome b family. Fungal cytochrome b-c1 complex contains 10 subunits; 3 respiratory subunits, 2 core proteins and 5 low-molecular weight proteins. Cytochrome b-c1 complex is a homodimer. It depends on heme b as a cofactor.

It localises to the mitochondrion inner membrane. Functionally, component of the ubiquinol-cytochrome c reductase complex (complex III or cytochrome b-c1 complex) that is part of the mitochondrial respiratory chain. The b-c1 complex mediates electron transfer from ubiquinol to cytochrome c. Contributes to the generation of a proton gradient across the mitochondrial membrane that is then used for ATP synthesis. The sequence is that of Cytochrome b (cob) from Epidermophyton floccosum.